We begin with the raw amino-acid sequence, 992 residues long: Disks large-associated protein 4 (992 aa).

Residues 1–20 are compositionally biased toward basic and acidic residues; the sequence is MKGLGDSRPRHLSDSLDPPH. 3 disordered regions span residues 1 to 30, 47 to 66, and 157 to 206; these read MKGL…TDRN, PGQN…QLPP, and LEGT…GWWS. Residues 162–171 are compositionally biased toward gly residues; sequence GKVGGNGSKK. Basic and acidic residues predominate over residues 172–194; it reads GGMEDGKGRRAKSKERAKAGEPK. A phosphoserine mark is found at serine 206 and serine 207. The residue at position 291 (arginine 291) is an Omega-N-methylarginine. The disordered stretch occupies residues 342–396; that stretch reads STTLLSPRETDAAAEGPIPCRRMRSGSYIKAMGDEDSDESGGSPKPSPKTAARRQ. Residues serine 378, serine 381, serine 388, serine 405, serine 415, and serine 421 each carry the phosphoserine modification. Disordered regions lie at residues 527–751, 763–798, and 915–992; these read SVSL…GPRQ, SYGD…AQPG, and TPEK…QTRL. The segment covering 528 to 554 has biased composition (low complexity); the sequence is VSLQSLSPPPSTGSLSNSRTLPSSSCL. Residues 576–591 are compositionally biased toward polar residues; sequence VTVQSSTESAQDTYLD. Phosphoserine is present on residues serine 580, serine 581, serine 609, serine 611, serine 665, and serine 744. The span at 600 to 620 shows a compositional bias: low complexity; that stretch reads TSQSGLSNSSDSLDSSTRPPS. Threonine 915 is modified (phosphothreonine). Basic and acidic residues-rich tracts occupy residues 915-925 and 940-958; these read TPEKRKEEKKP and VSRD…EARK. Residues 969-978 show a composition bias toward polar residues; the sequence is VRQNSATESA. Serine 973 carries the phosphoserine modification.

This sequence belongs to the SAPAP family. Interacts with DLG1 and DLG4/PSD-95.

It localises to the membrane. In terms of biological role, may play a role in the molecular organization of synapses and neuronal cell signaling. Could be an adapter protein linking ion channel to the subsynaptic cytoskeleton. May induce enrichment of PSD-95/SAP90 at the plasma membrane. This chain is Disks large-associated protein 4 (DLGAP4), found in Homo sapiens (Human).